Consider the following 820-residue polypeptide: Trimethylamine-N-oxide reductase (820 aa).

A signal peptide (tat-type signal) is located at residues 1 to 33; it reads MAITRRSFLKGVATTSAASVIGPSLLASASANA. S179 contributes to the Mo-bis(molybdopterin guanine dinucleotide) binding site.

The protein belongs to the prokaryotic molybdopterin-containing oxidoreductase family. It depends on Mo-bis(molybdopterin guanine dinucleotide) as a cofactor. In terms of processing, predicted to be exported by the Tat system. The position of the signal peptide cleavage has not been experimentally proven.

The protein localises to the periplasm. It carries out the reaction trimethylamine + 2 Fe(III)-[cytochrome c] + H2O = trimethylamine N-oxide + 2 Fe(II)-[cytochrome c] + 3 H(+). Functionally, reduces trimethylamine-N-oxide (TMAO) into trimethylamine; an anaerobic reaction coupled to energy-yielding reactions. The polypeptide is Trimethylamine-N-oxide reductase (torA) (Vibrio vulnificus (strain YJ016)).